The following is an 82-amino-acid chain: MNRLMILVFAAVILALASADEDVDITKRGVPCLCVSDGPRPRGNNLSGIMWMKTGGYGGNGCPKGWHFCGKSRGFFSDCCKR.

Residues 1–19 form the signal peptide; that stretch reads MNRLMILVFAAVILALASA. Residues 20-26 constitute a propeptide that is removed on maturation; the sequence is DEDVDIT. Intrachain disulfides connect Cys-32–Cys-79, Cys-34–Cys-69, and Cys-62–Cys-80.

This sequence belongs to the sea anemone sodium channel inhibitory toxin family. Type I subfamily.

The protein resides in the secreted. Its subcellular location is the nematocyst. Functionally, binds specifically to voltage-gated sodium channels (Nav), thereby delaying their inactivation during signal transduction. Causes death to crabs. This is Delta-actitoxin-Aeq2b 3 from Actinia equina (Beadlet anemone).